A 273-amino-acid chain; its full sequence is Non-homologous end joining protein Ku (273 aa).

Residues 13-190 (KLSLVTCPVA…FTGIEKKSDA (178 aa)) enclose the Ku domain. Residues 227 to 251 (KKKAKKPSKAKASKSTKGDDEEKSN) are disordered. Over residues 228-240 (KKAKKPSKAKASK) the composition is skewed to basic residues.

The protein belongs to the prokaryotic Ku family. As to quaternary structure, homodimer. Interacts with LigD.

Its function is as follows. With LigD forms a non-homologous end joining (NHEJ) DNA repair enzyme, which repairs dsDNA breaks with reduced fidelity. Binds linear dsDNA with 5'- and 3'- overhangs but not closed circular dsDNA nor ssDNA. Recruits and stimulates the ligase activity of LigD. This Allorhizobium ampelinum (strain ATCC BAA-846 / DSM 112012 / S4) (Agrobacterium vitis (strain S4)) protein is Non-homologous end joining protein Ku.